Here is a 363-residue protein sequence, read N- to C-terminus: Spermidine/putrescine import ATP-binding protein PotA (363 aa).

The region spanning 6–236 is the ABC transporter domain; the sequence is LEIRNVTRRF…PRSRFVADFI (231 aa). An ATP-binding site is contributed by 38–45; the sequence is GPSGCGKT.

This sequence belongs to the ABC transporter superfamily. Spermidine/putrescine importer (TC 3.A.1.11.1) family. In terms of assembly, the complex is composed of two ATP-binding proteins (PotA), two transmembrane proteins (PotB and PotC) and a solute-binding protein (PotD).

The protein resides in the cell inner membrane. The enzyme catalyses ATP + H2O + polyamine-[polyamine-binding protein]Side 1 = ADP + phosphate + polyamineSide 2 + [polyamine-binding protein]Side 1.. In terms of biological role, part of the ABC transporter complex PotABCD involved in spermidine/putrescine import. Responsible for energy coupling to the transport system. In Pseudomonas aeruginosa (strain UCBPP-PA14), this protein is Spermidine/putrescine import ATP-binding protein PotA.